Here is a 582-residue protein sequence, read N- to C-terminus: Phosphoribosylaminoimidazole carboxylase (582 aa).

Positions 114-305 constitute an ATP-grasp domain; that stretch reads KKYLAERGVA…QFENHLRAIL (192 aa). 143–200 lines the ATP pocket; sequence AGRLGLPLMLKAKTLAYDGRGNSPLKSASSEDIQASLKFLGDRPLYAEGWAPFVKEVA.

It in the C-terminal section; belongs to the AIR carboxylase family. Class I subfamily.

The catalysed reaction is 5-amino-1-(5-phospho-D-ribosyl)imidazole-4-carboxylate + H(+) = 5-amino-1-(5-phospho-beta-D-ribosyl)imidazole + CO2. Its pathway is purine metabolism; IMP biosynthesis via de novo pathway; 5-amino-1-(5-phospho-D-ribosyl)imidazole-4-carboxylate from 5-amino-1-(5-phospho-D-ribosyl)imidazole (carboxylase route): step 1/1. In Cryptococcus neoformans var. neoformans serotype D (strain B-3501A) (Filobasidiella neoformans), this protein is Phosphoribosylaminoimidazole carboxylase (ADE2).